A 122-amino-acid polypeptide reads, in one-letter code: Large ribosomal subunit protein bL12 (122 aa).

Belongs to the bacterial ribosomal protein bL12 family. As to quaternary structure, homodimer. Part of the ribosomal stalk of the 50S ribosomal subunit. Forms a multimeric L10(L12)X complex, where L10 forms an elongated spine to which 2 to 4 L12 dimers bind in a sequential fashion. Binds GTP-bound translation factors.

Its function is as follows. Forms part of the ribosomal stalk which helps the ribosome interact with GTP-bound translation factors. Is thus essential for accurate translation. This is Large ribosomal subunit protein bL12 from Staphylococcus aureus (strain Mu50 / ATCC 700699).